The sequence spans 541 residues: Chaperonin GroEL 2 (541 aa).

ATP contacts are provided by residues 29 to 32 (TLGP), 86 to 90 (DGTTT), G413, 476 to 478 (NAA), and D492.

The protein belongs to the chaperonin (HSP60) family. Forms a cylinder of 14 subunits composed of two heptameric rings stacked back-to-back. Interacts with the co-chaperonin GroES.

It localises to the secreted. It is found in the capsule. The protein localises to the cell surface. The protein resides in the cell wall. It carries out the reaction ATP + H2O + a folded polypeptide = ADP + phosphate + an unfolded polypeptide.. Its function is as follows. Together with its co-chaperonin GroES, plays an essential role in assisting protein folding. The GroEL-GroES system forms a nano-cage that allows encapsulation of the non-native substrate proteins and provides a physical environment optimized to promote and accelerate protein folding. This is Chaperonin GroEL 2 from Mycolicibacterium gilvum (strain PYR-GCK) (Mycobacterium gilvum (strain PYR-GCK)).